A 214-amino-acid polypeptide reads, in one-letter code: Adenylate kinase (214 aa).

10-15 (GAGKGT) contacts ATP. The segment at 30 to 59 (ATGDVLRAAVKEGTPLGLEAKAAMDRGDLV) is NMP. AMP is bound by residues threonine 31, arginine 36, 57 to 59 (DLV), and glutamine 92. The interval 126–161 (GRTTCEACQRPFFGRQPGETCTEGGVSGTLVRRKDD) is LID. Arginine 127 is a binding site for ATP. Positions 158 and 169 each coordinate AMP. Position 198 (glycine 198) interacts with ATP.

The protein belongs to the adenylate kinase family. In terms of assembly, monomer.

The protein resides in the cytoplasm. It carries out the reaction AMP + ATP = 2 ADP. It participates in purine metabolism; AMP biosynthesis via salvage pathway; AMP from ADP: step 1/1. In terms of biological role, catalyzes the reversible transfer of the terminal phosphate group between ATP and AMP. Plays an important role in cellular energy homeostasis and in adenine nucleotide metabolism. This Gemmatimonas aurantiaca (strain DSM 14586 / JCM 11422 / NBRC 100505 / T-27) protein is Adenylate kinase.